A 98-amino-acid chain; its full sequence is Cell division topological specificity factor (98 aa).

Belongs to the MinE family.

Its function is as follows. Prevents the cell division inhibition by proteins MinC and MinD at internal division sites while permitting inhibition at polar sites. This ensures cell division at the proper site by restricting the formation of a division septum at the midpoint of the long axis of the cell. The protein is Cell division topological specificity factor of Methylorubrum populi (strain ATCC BAA-705 / NCIMB 13946 / BJ001) (Methylobacterium populi).